Reading from the N-terminus, the 49-residue chain is MDLSCSCATGGSCTCASSCKCKEYKCTSCKKNCCSCCPMGCAKCAQGCT.

The tract at residues Met1 to Cys29 is beta. A divalent metal cation-binding residues include Cys5, Cys7, Cys13, Cys15, Cys19, Cys21, Cys26, Cys29, Cys33, Cys34, Cys36, Cys37, Cys41, Cys44, and Cys48. Residues Lys30–Thr49 are alpha.

Belongs to the metallothionein superfamily. Type 1 family.

Its function is as follows. Metallothioneins have a high content of cysteine residues that bind various heavy metals. This chain is Putative metallothionein MT1DP (MT1DP), found in Homo sapiens (Human).